The following is a 381-amino-acid chain: Opsin-1 (381 aa).

At 1-53 the chain is on the extracellular side; sequence MASASLISEPSFSAYWGGSGGFANQTVVDKVPPEMLYLVDPHWYQFPPMNPLW. Asparagine 24 carries an N-linked (GlcNAc...) asparagine glycan. The chain crosses the membrane as a helical span at residues 54–78; the sequence is HGLLGFVIGVLGVISVIGNGMVIYI. The Cytoplasmic portion of the chain corresponds to 79–90; that stretch reads FSTTKSLRTPSN. Residues 91–115 form a helical membrane-spanning segment; the sequence is LLVVNLAFSDFLMMFTMSAPMGINC. The Extracellular portion of the chain corresponds to 116–130; the sequence is YYETWVLGPFMCELY. A disulfide bridge connects residues cysteine 127 and cysteine 204. The helical transmembrane segment at 131–150 threads the bilayer; that stretch reads ALFGSLFGCGSIWTMTMIAL. At 151–169 the chain is on the cytoplasmic side; it reads DRYNVIVKGLSAKPMTNKT. Residues 170–193 form a helical membrane-spanning segment; it reads AMLRILFIWAFSVAWTIMPLFGWN. Residues 194–217 lie on the Extracellular side of the membrane; it reads RYVPEGNMTACGTDYLTKDWVSRS. Asparagine 200 carries an N-linked (GlcNAc...) asparagine glycan. The chain crosses the membrane as a helical span at residues 218–245; that stretch reads YILVYSFFVYLLPLGTIIYSYFFILQAV. Over 246-280 the chain is Cytoplasmic; sequence SAHEKQMREQRKKMNVASLRSAEASQTSAECKLAK. The helical transmembrane segment at 281-304 threads the bilayer; that stretch reads VALMTISLWFFGWTPYLIINFTGI. The Extracellular portion of the chain corresponds to 305–311; sequence FETMKIS. The helical transmembrane segment at 312 to 336 threads the bilayer; it reads PLLTIWGSLFAKANAVFNPIVYGIS. Residue lysine 323 is modified to N6-(retinylidene)lysine. Over 337–381 the chain is Cytoplasmic; the sequence is HPKYRAALEKKFPSLACASSSDDNTSVASGATTVSDEKSEKSASA. Positions 354–370 are enriched in polar residues; that stretch reads ASSSDDNTSVASGATTV. The disordered stretch occupies residues 354-381; sequence ASSSDDNTSVASGATTVSDEKSEKSASA. Basic and acidic residues predominate over residues 371–381; that stretch reads SDEKSEKSASA.

The protein belongs to the G-protein coupled receptor 1 family. Opsin subfamily. In terms of processing, phosphorylated on some or all of the serine and threonine residues present in the C-terminal region.

It is found in the cell projection. It localises to the rhabdomere membrane. Visual pigments are the light-absorbing molecules that mediate vision. They consist of an apoprotein, opsin, covalently linked to cis-retinal. This chain is Opsin-1 (Lo1), found in Schistocerca gregaria (Desert locust).